The following is a 130-amino-acid chain: Large ribosomal subunit protein bL19 (130 aa).

It belongs to the bacterial ribosomal protein bL19 family.

Its function is as follows. This protein is located at the 30S-50S ribosomal subunit interface and may play a role in the structure and function of the aminoacyl-tRNA binding site. In Burkholderia lata (strain ATCC 17760 / DSM 23089 / LMG 22485 / NCIMB 9086 / R18194 / 383), this protein is Large ribosomal subunit protein bL19.